Consider the following 118-residue polypeptide: Protein RALF-like 24 (118 aa).

A signal peptide spans 1–22 (MSRSLALVYLSLLCLQTHLSIS). The propeptide at 23-63 (VTVPIPSVNGEIDAMLNRNGVIGEEEGEEMMPSEISRRVMM) is removed in mature form. Cystine bridges form between Cys81-Cys91 and Cys103-Cys109.

The protein belongs to the plant rapid alkalinization factor (RALF) family. Post-translationally, proteolytically cleaved, probably by S1P, a subtilisin-like serine protease (subtilase).

The protein resides in the secreted. Cell signaling peptide that may regulate plant stress, growth, and development. Mediates a rapid alkalinization of extracellular space by mediating a transient increase in the cytoplasmic Ca(2+) concentration leading to a calcium-dependent signaling events through a cell surface receptor and a concomitant activation of some intracellular mitogen-activated protein kinases. This chain is Protein RALF-like 24 (RALFL24), found in Arabidopsis thaliana (Mouse-ear cress).